The following is a 132-amino-acid chain: Ribosome-binding factor A (132 aa).

It belongs to the RbfA family. In terms of assembly, monomer. Binds 30S ribosomal subunits, but not 50S ribosomal subunits or 70S ribosomes.

It localises to the cytoplasm. Its function is as follows. One of several proteins that assist in the late maturation steps of the functional core of the 30S ribosomal subunit. Associates with free 30S ribosomal subunits (but not with 30S subunits that are part of 70S ribosomes or polysomes). Required for efficient processing of 16S rRNA. May interact with the 5'-terminal helix region of 16S rRNA. The sequence is that of Ribosome-binding factor A from Prochlorococcus marinus subsp. pastoris (strain CCMP1986 / NIES-2087 / MED4).